A 637-amino-acid chain; its full sequence is Transcription termination factor FttA (637 aa).

The segment at 4–71 is KHa; it reads EDVLLDLKHK…IAMRPDPRVL (68 aa). Residues 72–139 are KHb; the sequence is ATPEDSISII…WIPKVVRTPP (68 aa). A metallo-beta-lactamase N-terminus region spans residues 180 to 383; that stretch reads WVRVTALGGC…VISEATYGNA (204 aa). Positions 242, 244, 246, 247, 329, and 352 each coordinate Zn(2+). Residues 384 to 578 are beta-Casp; sequence NAFQPALKDA…MEVQVVDGFS (195 aa). The metallo-beta-lactamase C-terminus stretch occupies residues 579–637; the sequence is GHSDRRQLMEYVKRMQPRPERVFTEHGDEKACVDLASSVYKKLKIETRALTNLETVRLL. H604 contacts Zn(2+).

This sequence belongs to the metallo-beta-lactamase superfamily. RNA-metabolizing metallo-beta-lactamase-like family. FttA subfamily. Homodimer. Interacts with RNA polymerase (RNAP), interacts with the Spt4-Spt5 complex. Zn(2+) is required as a cofactor.

Terminates transcription on the whole genome. Termination is linked to FttA-mediated RNA cleavage and does not require NTP hydrolysis. Cleaves endonucleolytically at the RNA exit channel of RNA polymerase (RNAP); the 5'-3' exonuclease activity of this protein degrades the nascent RNA released from RNAP. In Methanosarcina mazei (strain ATCC BAA-159 / DSM 3647 / Goe1 / Go1 / JCM 11833 / OCM 88) (Methanosarcina frisia), this protein is Transcription termination factor FttA.